Consider the following 359-residue polypeptide: Type-1 angiotensin II receptor (359 aa).

Residues M1–S25 lie on the Extracellular side of the membrane. Residue N4 is glycosylated (N-linked (GlcNAc...) asparagine). Angiotensin II is bound by residues Q15 and D17. Intrachain disulfides connect C18–C274 and C101–C180. A helical transmembrane segment spans residues Y26–F55. Over Y56 to T61 the chain is Cytoplasmic. Residues V62–A89 traverse the membrane as a helical segment. Over M90–N98 the chain is Extracellular. A helical membrane pass occupies residues H99–D125. The Cytoplasmic portion of the chain corresponds to R126–T141. Residues M142 to I165 traverse the membrane as a helical segment. At H166–T190 the chain is on the extracellular side. Angiotensin II is bound at residue R167. N-linked (GlcNAc...) asparagine glycosylation occurs at N176. Angiotensin II-binding residues include F182, H183, and Y184. N188 carries N-linked (GlcNAc...) asparagine glycosylation. The chain crosses the membrane as a helical span at residues L191 to T216. K199 lines the angiotensin II pocket. The Cytoplasmic portion of the chain corresponds to L217–F239. The helical transmembrane segment at R240–L268 threads the bilayer. Over G269–D278 the chain is Extracellular. The chain crosses the membrane as a helical span at residues V279–F304. Over L305 to E359 the chain is Cytoplasmic. C355 carries S-palmitoyl cysteine lipidation.

It belongs to the G-protein coupled receptor 1 family. In terms of assembly, interacts with MAS1. Interacts with ARRB1. Interacts with FLNA (via filamin repeat 21); increases PKA-mediated phosphorylation of FLNA. C-terminal Ser or Thr residues may be phosphorylated.

The protein resides in the cell membrane. In terms of biological role, receptor for angiotensin II, a vasoconstricting peptide, which acts as a key regulator of blood pressure and sodium retention by the kidney. The activated receptor in turn couples to G-alpha proteins G(q) (GNAQ, GNA11, GNA14 or GNA15) and thus activates phospholipase C and increases the cytosolic Ca(2+) concentrations, which in turn triggers cellular responses such as stimulation of protein kinase C. The polypeptide is Type-1 angiotensin II receptor (AGTR1) (Meriones unguiculatus (Mongolian jird)).